The following is a 232-amino-acid chain: MEYVVVIPAAGQGKRMKAGKNKLFISLKGAPVIIHTLRVFESHAPCQKIILVINESEREDFRQLLAQFPIQTEIELVTGGAERQHSVYEGLKMIDKESVVLVHDGARPFVTHQHIDKLVETAEEAGAAVLAVPVKDTIKRAEGSRVAETFDRSSLWAVQTPQAFRLSLLKTAHMEAENKGFLGTDDASLVERLDGYQVSIVEGSYTNIKLTTPDDLIFAEAIMKAESGNHNV.

This sequence belongs to the IspD/TarI cytidylyltransferase family. IspD subfamily.

The enzyme catalyses 2-C-methyl-D-erythritol 4-phosphate + CTP + H(+) = 4-CDP-2-C-methyl-D-erythritol + diphosphate. It participates in isoprenoid biosynthesis; isopentenyl diphosphate biosynthesis via DXP pathway; isopentenyl diphosphate from 1-deoxy-D-xylulose 5-phosphate: step 2/6. Catalyzes the formation of 4-diphosphocytidyl-2-C-methyl-D-erythritol from CTP and 2-C-methyl-D-erythritol 4-phosphate (MEP). This is 2-C-methyl-D-erythritol 4-phosphate cytidylyltransferase from Bacillus velezensis (strain DSM 23117 / BGSC 10A6 / LMG 26770 / FZB42) (Bacillus amyloliquefaciens subsp. plantarum).